Here is a 428-residue protein sequence, read N- to C-terminus: MNFDVVIIGGGLAGLTCGIALQEQGKRCVIINNGQAAIDFSSGSMDLLSRLPSGQKVENVYQSLDELKLQAPEHPYSILGKDQVLAKAQQFEQLAQSLNLHLEGSTVQNHERITPLGGLRATWLSPNSVPTVKHLTALADKQVAILGIEGYHDFQPQLLADNLKQHSQFADYEFTIGYLNIPELDYLRQNSREFRSVNIAQLLEHKLSFQDLVQEIKQAAGNAKAVFLPACFGLDNQDFFNSLQQATGLALFELPTLPPSLLGIRQHRQLRSRFEQLGGMMMNGDRAVKAEFEGKNVARIFTTSHQEEPISADYFVLAAGSFFSNGLVAEFERVKEPVFDLDICGCKNFDSSDRFTWTNNRFAAPQPYQSAGVVINSACQVQKNGEVVSNLYAVGNVIGGFQGIEQGCGSGVAVVTALTVAEQIGGTK.

It belongs to the anaerobic G-3-P dehydrogenase subunit B family. In terms of assembly, composed of a catalytic GlpA/B dimer and of membrane bound GlpC. Requires FMN as cofactor.

The enzyme catalyses a quinone + sn-glycerol 3-phosphate = dihydroxyacetone phosphate + a quinol. Its pathway is polyol metabolism; glycerol degradation via glycerol kinase pathway; glycerone phosphate from sn-glycerol 3-phosphate (anaerobic route): step 1/1. In terms of biological role, conversion of glycerol 3-phosphate to dihydroxyacetone. Uses fumarate or nitrate as electron acceptor. The polypeptide is Anaerobic glycerol-3-phosphate dehydrogenase subunit B (Actinobacillus pleuropneumoniae serotype 5b (strain L20)).